A 231-amino-acid chain; its full sequence is Ribosomal RNA large subunit methyltransferase E (231 aa).

Residues glycine 76, tryptophan 78, aspartate 99, aspartate 115, and aspartate 139 each contribute to the S-adenosyl-L-methionine site. The active-site Proton acceptor is lysine 179.

This sequence belongs to the class I-like SAM-binding methyltransferase superfamily. RNA methyltransferase RlmE family.

Its subcellular location is the cytoplasm. The catalysed reaction is uridine(2552) in 23S rRNA + S-adenosyl-L-methionine = 2'-O-methyluridine(2552) in 23S rRNA + S-adenosyl-L-homocysteine + H(+). Specifically methylates the uridine in position 2552 of 23S rRNA at the 2'-O position of the ribose in the fully assembled 50S ribosomal subunit. The protein is Ribosomal RNA large subunit methyltransferase E of Bradyrhizobium sp. (strain ORS 278).